The following is a 459-amino-acid chain: Glutamate--tRNA ligase 1 (459 aa).

The short motif at 8-18 (PSPTGYIHIGN) is the 'HIGH' region element. The 'KMSKS' region motif lies at 249–253 (GLSKR). Lysine 252 lines the ATP pocket.

This sequence belongs to the class-I aminoacyl-tRNA synthetase family. Glutamate--tRNA ligase type 1 subfamily. In terms of assembly, monomer.

It localises to the cytoplasm. The enzyme catalyses tRNA(Glu) + L-glutamate + ATP = L-glutamyl-tRNA(Glu) + AMP + diphosphate. Functionally, catalyzes the attachment of glutamate to tRNA(Glu) in a two-step reaction: glutamate is first activated by ATP to form Glu-AMP and then transferred to the acceptor end of tRNA(Glu). The protein is Glutamate--tRNA ligase 1 of Bartonella quintana (strain Toulouse) (Rochalimaea quintana).